The chain runs to 179 residues: Large ribosomal subunit protein uL5 (179 aa).

It belongs to the universal ribosomal protein uL5 family. In terms of assembly, part of the 50S ribosomal subunit; part of the 5S rRNA/L5/L18/L25 subcomplex. Contacts the 5S rRNA and the P site tRNA. Forms a bridge to the 30S subunit in the 70S ribosome.

This is one of the proteins that bind and probably mediate the attachment of the 5S RNA into the large ribosomal subunit, where it forms part of the central protuberance. In the 70S ribosome it contacts protein S13 of the 30S subunit (bridge B1b), connecting the 2 subunits; this bridge is implicated in subunit movement. Contacts the P site tRNA; the 5S rRNA and some of its associated proteins might help stabilize positioning of ribosome-bound tRNAs. In Prochlorococcus marinus (strain AS9601), this protein is Large ribosomal subunit protein uL5.